Reading from the N-terminus, the 306-residue chain is Glutathione transport system permease protein GsiC (306 aa).

The Cytoplasmic portion of the chain corresponds to 1-8 (MLNYVLKR). A helical transmembrane segment spans residues 9–29 (LLGLIPTLLIVAVLVFLFVHL). Over 30–102 (LPGDPARLIA…SRFLPTLWLT (73 aa)) the chain is Periplasmic. Positions 95 to 292 (FLPTLWLTIT…LEFILINLVV (198 aa)) constitute an ABC transmembrane type-1 domain. The helical transmembrane segment at 103–123 (ITSMIWAVLFGMAIGIAAAVW) threads the bilayer. Over 124–134 (RNRWPDRVGMT) the chain is Cytoplasmic. Residues 135–155 (LAVTGISFPAFALGMLLMQIF) form a helical membrane-spanning segment. At 156–168 (SVDLGWLPTVGAD) the chain is on the periplasmic side. A helical membrane pass occupies residues 169-189 (SWQHYILPSLTLGAAVASVMA). Residues 190–228 (RFTRSSFVDVLSEDYMRTARAKGVSETWVVLKHGLRNAM) are Cytoplasmic-facing. The helical transmembrane segment at 229–249 (IPVVTMMGLQFGFLLGGSIVV) threads the bilayer. The Periplasmic segment spans residues 250–278 (EKVFNWPGLGRLLVDSVDMRDYPVIQAEV). Residues 279–299 (LLFSLEFILINLVVDVLYAAI) traverse the membrane as a helical segment. The Cytoplasmic portion of the chain corresponds to 300–306 (NPAIRYK).

The protein belongs to the binding-protein-dependent transport system permease family. As to quaternary structure, the complex is composed of two ATP-binding proteins (GsiA), two transmembrane proteins (GsiC and GsiD) and a solute-binding protein (GsiB).

It localises to the cell inner membrane. In terms of biological role, part of the ABC transporter complex GsiABCD involved in glutathione import. Probably responsible for the translocation of the substrate across the membrane. The polypeptide is Glutathione transport system permease protein GsiC (Salmonella choleraesuis (strain SC-B67)).